We begin with the raw amino-acid sequence, 210 residues long: Small heat shock protein hspG6 (210 aa).

The sHSP domain maps to 34 to 210 (KTIIDKLPPM…YSNTIKININ (177 aa)). Positions 93–151 (VIEKSTSSSTLDSKEDEPSIEEFEDDIKPKSKSDNTTVSTTTTATTKENKEDENKTKST) are disordered. Residues 126 to 138 (DNTTVSTTTTATT) show a composition bias toward low complexity. Residues 139–151 (KENKEDENKTKST) show a composition bias toward basic and acidic residues.

Belongs to the small heat shock protein (HSP20) family.

This chain is Small heat shock protein hspG6 (hspG6), found in Dictyostelium discoideum (Social amoeba).